Consider the following 874-residue polypeptide: Probable inorganic carbon transporter subunit DabA (874 aa).

C398, D400, H580, and C595 together coordinate Zn(2+).

The protein belongs to the inorganic carbon transporter (TC 9.A.2) DabA family. Forms a complex with DabB. Zn(2+) is required as a cofactor.

It localises to the cell membrane. Functionally, part of an energy-coupled inorganic carbon pump. The sequence is that of Probable inorganic carbon transporter subunit DabA from Bacillus cytotoxicus (strain DSM 22905 / CIP 110041 / 391-98 / NVH 391-98).